Consider the following 374-residue polypeptide: MSGESMNFSDVFDSSEDYFVSVNTSYYSVDSEMLLCSLQEVRQFSRLFVPIAYSLICVFGLLGNILVVITFAFYKKARSMTDVYLLNMAIADILFVLTLPFWAVSHATGAWVFSNATCKLLKGIYAINFNCGMLLLTCISMDRYIAIVQATKSFRLRSRTLPRSKIICLVVWGLSVIISSSTFVFNQKYNTQGSDVCEPKYQTVSEPIRWKLLMLGLELLFGFFIPLMFMIFCYTFIVKTLVQAQNSKRHKAIRVIIAVVLVFLACQIPHNMVLLVTAANLGKMNRSCQSEKLIGYTKTVTEVLAFLHCCLNPVLYAFIGQKFRNYFLKILKDLWCVRRKYKSSGFSCAGRYSENISRQTSETADNDNASSFTM.

The Extracellular segment spans residues 1–47; the sequence is MSGESMNFSDVFDSSEDYFVSVNTSYYSVDSEMLLCSLQEVRQFSRL. N-linked (GlcNAc...) asparagine glycosylation is found at asparagine 7 and asparagine 23. Residues 48-74 form a helical membrane-spanning segment; the sequence is FVPIAYSLICVFGLLGNILVVITFAFY. Residues 75 to 83 lie on the Cytoplasmic side of the membrane; that stretch reads KKARSMTDV. The chain crosses the membrane as a helical span at residues 84 to 104; sequence YLLNMAIADILFVLTLPFWAV. The Extracellular segment spans residues 105-119; sequence SHATGAWVFSNATCK. Cysteine 118 and cysteine 197 are oxidised to a cystine. The helical transmembrane segment at 120-141 threads the bilayer; sequence LLKGIYAINFNCGMLLLTCISM. Topologically, residues 142–159 are cytoplasmic; that stretch reads DRYIAIVQATKSFRLRSR. The helical transmembrane segment at 160–180 threads the bilayer; it reads TLPRSKIICLVVWGLSVIISS. Topologically, residues 181-211 are extracellular; that stretch reads STFVFNQKYNTQGSDVCEPKYQTVSEPIRWK. Residues 212–238 form a helical membrane-spanning segment; sequence LLMLGLELLFGFFIPLMFMIFCYTFIV. Residues 239–254 lie on the Cytoplasmic side of the membrane; the sequence is KTLVQAQNSKRHKAIR. Residues 255–279 form a helical membrane-spanning segment; sequence VIIAVVLVFLACQIPHNMVLLVTAA. Over 280-303 the chain is Extracellular; it reads NLGKMNRSCQSEKLIGYTKTVTEV. Residues 304-321 traverse the membrane as a helical segment; it reads LAFLHCCLNPVLYAFIGQ. Residues 322–374 lie on the Cytoplasmic side of the membrane; that stretch reads KFRNYFLKILKDLWCVRRKYKSSGFSCAGRYSENISRQTSETADNDNASSFTM.

Belongs to the G-protein coupled receptor 1 family. As to expression, sperm. Mainly localized in the tail and in the postacrosomal region but is also found in the midpiece and basal region in a small percentage of sperm cells. Reduced levels found in the sperms of asthenozoospermia and leukocytospermia patients (at protein level). Spleen, lymph nodes, appendix, and fetal liver. Expressed in lymphocytes, T-cells and B-cells but not in natural killer cells, monocytes or granulocytes.

It localises to the cell membrane. Its subcellular location is the cell surface. Receptor for the C-C type chemokine CCL20. Binds to CCL20 and subsequently transduces a signal by increasing the intracellular calcium ion levels. Although CCL20 is its major ligand it can also act as a receptor for non-chemokine ligands such as beta-defensins. Binds to defensin DEFB1 leading to increase in intracellular calcium ions and cAMP levels. Its binding to DEFB1 is essential for the function of DEFB1 in regulating sperm motility and bactericidal activity. Binds to defensins DEFB4 and DEFB4A/B and mediates their chemotactic effects. The ligand-receptor pair CCL20-CCR6 is responsible for the chemotaxis of dendritic cells (DC), effector/ memory T-cells and B-cells and plays an important role at skin and mucosal surfaces under homeostatic and inflammatory conditions, as well as in pathology, including cancer and various autoimmune diseases. CCR6-mediated signals are essential for immune responses to microbes in the intestinal mucosa and in the modulation of inflammatory responses initiated by tissue insult and trauma. CCR6 is essential for the recruitment of both the pro-inflammatory IL17 producing helper T-cells (Th17) and the regulatory T-cells (Treg) to sites of inflammation. Required for the normal migration of Th17 cells in Peyers-patches and other related tissue sites of the intestine and plays a role in regulating effector T-cell balance and distribution in inflamed intestine. Plays an important role in the coordination of early thymocyte precursor migration events important for normal subsequent thymocyte precursor development, but is not required for the formation of normal thymic natural regulatory T-cells (nTregs). Required for optimal differentiation of DN2 and DN3 thymocyte precursors. Essential for B-cell localization in the subepithelial dome of Peyers-patches and for efficient B-cell isotype switching to IgA in the Peyers-patches. Essential for appropriate anatomical distribution of memory B-cells in the spleen and for the secondary recall response of memory B-cells. Positively regulates sperm motility and chemotaxis via its binding to CCL20. This Homo sapiens (Human) protein is C-C chemokine receptor type 6 (CCR6).